The primary structure comprises 1448 residues: Murinoglobulin-2 (1448 aa).

The first 24 residues, 1 to 24, serve as a signal peptide directing secretion; sequence MWKNREAQLCLFSVLLAFLPSASL. Disulfide bonds link C48/C86, C245/C277, and C263/C289. A glycan (N-linked (GlcNAc...) asparagine) is linked at N55. 4 N-linked (GlcNAc...) asparagine glycosylation sites follow: N295, N315, N387, and N502. Disulfide bonds link C462–C556, C588–C748, and C636–C681. The segment at 678–709 is bait region; that stretch reads PTYCYDLPKEPPRKDPPRKDPEPKDTVVETIR. Residues N751 and N846 are each glycosylated (N-linked (GlcNAc...) asparagine). Intrachain disulfides connect C824–C860, C898–C1295, C1056–C1101, and C1326–C1441. The segment at residues 949-952 is a cross-link (isoglutamyl cysteine thioester (Cys-Gln)); sequence CGEQ. The N-linked (GlcNAc...) asparagine glycan is linked to N968. N-linked (GlcNAc...) asparagine glycans are attached at residues N1114, N1285, and N1398.

Belongs to the protease inhibitor I39 (alpha-2-macroglobulin) family. As to quaternary structure, monomer.

Its subcellular location is the secreted. A proteinase activates the inhibitor by specific proteolysis in the bait region, which, by an unknown mechanism leads to reaction at the cysteinyl-glutamyl internal thiol ester site and to a conformational change, whereby the proteinase is trapped and/or covalently bound to the inhibitor. While in the tetrameric proteinase inhibitors steric inhibition is sufficiently strong, monomeric forms need a covalent linkage between the activated glutamyl residue of the original thiol ester and a terminal amino group of a lysine or another nucleophilic group on the proteinase, for inhibition to be effective. The sequence is that of Murinoglobulin-2 from Rattus norvegicus (Rat).